The primary structure comprises 141 residues: Hemoglobin subunit alpha (141 aa).

A Globin domain is found at 1-141 (VLSPADKTNV…VSTVLTSKYR (141 aa)). The residue at position 3 (S3) is a Phosphoserine. N6-succinyllysine is present on K7. The residue at position 8 (T8) is a Phosphothreonine. N6-succinyllysine is present on K11. K16 carries the post-translational modification N6-acetyllysine; alternate. Residue K16 is modified to N6-succinyllysine; alternate. Y24 bears the Phosphotyrosine mark. The residue at position 35 (S35) is a Phosphoserine. At K40 the chain carries N6-succinyllysine. At S49 the chain carries Phosphoserine. Position 58 (H58) interacts with O2. Residue H87 participates in heme b binding. S102 is subject to Phosphoserine. Position 108 is a phosphothreonine (T108). A phosphoserine mark is found at S124 and S131. Phosphothreonine is present on residues T134 and T137. Position 138 is a phosphoserine (S138).

It belongs to the globin family. As to quaternary structure, heterotetramer of two alpha chains and two beta chains. As to expression, red blood cells.

In terms of biological role, involved in oxygen transport from the lung to the various peripheral tissues. Functionally, hemopressin acts as an antagonist peptide of the cannabinoid receptor CNR1. Hemopressin-binding efficiently blocks cannabinoid receptor CNR1 and subsequent signaling. The chain is Hemoglobin subunit alpha (HBA) from Semnopithecus entellus (Northern plains gray langur).